A 405-amino-acid chain; its full sequence is Threonine synthase (405 aa).

Position 104 is an N6-(pyridoxal phosphate)lysine (lysine 104). Pyridoxal 5'-phosphate is bound by residues asparagine 130, glycine 231 to asparagine 235, and threonine 369.

Belongs to the threonine synthase family. In terms of assembly, homotrimer. Requires pyridoxal 5'-phosphate as cofactor.

It carries out the reaction O-phospho-L-homoserine + H2O = L-threonine + phosphate. It functions in the pathway amino-acid biosynthesis; L-threonine biosynthesis; L-threonine from L-aspartate: step 5/5. In terms of biological role, catalyzes the gamma-elimination of phosphate from L-phosphohomoserine and the beta-addition of water to produce L-threonine. Does not catalyze the conversion of O-acetyl-L-homoserine into threonine. The chain is Threonine synthase (thrC) from Methanosarcina acetivorans (strain ATCC 35395 / DSM 2834 / JCM 12185 / C2A).